A 104-amino-acid polypeptide reads, in one-letter code: MTAPTKMTFFSRFEADILAGKKTITIRDESEKDYQPGTTVEVSTLEEGRVFCQLKILSVEPIAFSELNEFHAEQENMTLATLKEVIQEIYPGIEQLYVIQYQRV.

The ASCH domain maps to 7–93 (MTFFSRFEAD…EVIQEIYPGI (87 aa)). Lys-22 serves as the catalytic Proton acceptor. Residue Thr-25 is the Nucleophile of the active site. The active-site Proton donor is the Glu-75.

Belongs to the N(4)-acetylcytidine amidohydrolase family.

It carries out the reaction N(4)-acetylcytidine + H2O = cytidine + acetate + H(+). It catalyses the reaction N(4)-acetyl-2'-deoxycytidine + H2O = 2'-deoxycytidine + acetate + H(+). The catalysed reaction is N(4)-acetylcytosine + H2O = cytosine + acetate + H(+). Catalyzes the hydrolysis of N(4)-acetylcytidine (ac4C). The protein is N(4)-acetylcytidine amidohydrolase of Vibrio vulnificus (strain YJ016).